Here is a 450-residue protein sequence, read N- to C-terminus: Enolase (450 aa).

(2R)-2-phosphoglycerate is bound at residue Q167. E209 acts as the Proton donor in catalysis. D250, E307, and D334 together coordinate Mg(2+). (2R)-2-phosphoglycerate-binding residues include K359, R388, S389, and K410. The active-site Proton acceptor is the K359.

Belongs to the enolase family. Requires Mg(2+) as cofactor.

Its subcellular location is the cytoplasm. It is found in the secreted. The protein resides in the cell surface. The catalysed reaction is (2R)-2-phosphoglycerate = phosphoenolpyruvate + H2O. Its pathway is carbohydrate degradation; glycolysis; pyruvate from D-glyceraldehyde 3-phosphate: step 4/5. In terms of biological role, catalyzes the reversible conversion of 2-phosphoglycerate (2-PG) into phosphoenolpyruvate (PEP). It is essential for the degradation of carbohydrates via glycolysis. 'Moonlights' as a plasminogen receptor and plasmin activator. Contributes to host (pig) cell adhesion; anti-enolase antibodies decrease binding to porcine kidney cells about 60%. Binds host plasminogen and fibronectin in vitro; enhances the activity of host tissue-specific plasminogen activator (tPA), and helps plasminogen and tPA degrade articifial host extracellular matrices. The protein is Enolase of Mesomycoplasma hyorhinis (strain HUB-1) (Mycoplasma hyorhinis).